Consider the following 430-residue polypeptide: Synaptotagmin-11 (430 aa).

The Vesicular portion of the chain corresponds to 1–15; it reads MAEITNIRPSFDVSP. Residues 16 to 36 traverse the membrane as a helical segment; that stretch reads VAAGLIGASVLVVCVSVTVFV. Over 37-430 the chain is Cytoplasmic; sequence WTCCHQQAEK…IAKWHSLSEY (394 aa). The span at 79–90 shows a compositional bias: basic and acidic residues; the sequence is RRDKDGPRRESG. Disordered regions lie at residues 79–120 and 132–152; these read RRDK…CMDQ and RSPMTSLTPGESKATSPSSPE. A Phosphoserine modification is found at Ser133. Residues 134-150 show a composition bias toward polar residues; it reads PMTSLTPGESKATSPSS. 2 C2 domains span residues 156-278 and 290-425; these read MLGS…QLTR and SRGE…AKWH. Ca(2+)-binding residues include Asp249, Ser252, and Asp255.

The protein belongs to the synaptotagmin family. As to quaternary structure, homodimer. Can also form heterodimers. Interacts with PRKN. Interacts (via C2 2 domain) with AGO2 and SND1; the interaction with SND1 is direct. Interacts with KIF1A; the interaction increases in presence of calcium. Ca(2+) is required as a cofactor. Post-translationally, ubiquitinated, at least by PRKN, and targeted to the proteasome complex for degradation. Ubiquitination is inhibited by ATP13A2. As to expression, expressed in cerebellun, cerebellar cortex, hippocampus, olfactory bulb and spinal cord (at protein level). Expressed by neurons, astrocytes and microglia (at protein level). Expressed in macrophages (at protein level).

The protein localises to the cytoplasmic vesicle membrane. It localises to the perikaryon. The protein resides in the golgi apparatus. Its subcellular location is the trans-Golgi network membrane. It is found in the recycling endosome membrane. The protein localises to the lysosome membrane. It localises to the cytoplasmic vesicle. The protein resides in the phagosome. Its subcellular location is the cell projection. It is found in the axon. The protein localises to the dendrite. It localises to the postsynaptic density. The protein resides in the clathrin-coated vesicle membrane. Functionally, synaptotagmin family member involved in vesicular and membrane trafficking which does not bind Ca(2+). Inhibits clathrin-mediated and bulk endocytosis, functions to ensure precision in vesicle retrieval. Plays an important role in dopamine transmission by regulating endocytosis and the vesicle-recycling process. Essential component of a neuronal vesicular trafficking pathway that differs from the synaptic vesicle trafficking pathway but is crucial for development and synaptic plasticity. In macrophages and microglia, inhibits the conventional cytokine secretion, of at least IL6 and TNF, and phagocytosis. In astrocytes, regulates lysosome exocytosis, mechanism required for the repair of injured astrocyte cell membrane. Required for the ATP13A2-mediated regulation of the autophagy-lysosome pathway. The chain is Synaptotagmin-11 from Mus musculus (Mouse).